A 301-amino-acid chain; its full sequence is 4-hydroxybenzoate octaprenyltransferase (301 aa).

7 consecutive transmembrane segments (helical) span residues 34 to 54, 57 to 77, 108 to 128, 163 to 183, 222 to 242, 248 to 268, and 280 to 300; these read IGSL…AGGL, LWTL…GCVI, LWVF…LNWL, WGIP…AWLL, DLIA…LVGL, IAYW…FHIA, and FLHN…SLAL.

Belongs to the UbiA prenyltransferase family. Mg(2+) serves as cofactor.

The protein resides in the cell inner membrane. It catalyses the reaction all-trans-octaprenyl diphosphate + 4-hydroxybenzoate = 4-hydroxy-3-(all-trans-octaprenyl)benzoate + diphosphate. It participates in cofactor biosynthesis; ubiquinone biosynthesis. Its function is as follows. Catalyzes the prenylation of para-hydroxybenzoate (PHB) with an all-trans polyprenyl group. Mediates the second step in the final reaction sequence of ubiquinone-8 (UQ-8) biosynthesis, which is the condensation of the polyisoprenoid side chain with PHB, generating the first membrane-bound Q intermediate 3-octaprenyl-4-hydroxybenzoate. The protein is 4-hydroxybenzoate octaprenyltransferase of Xanthomonas campestris pv. campestris (strain 8004).